The sequence spans 376 residues: Rhodopsin (376 aa).

Residues 1 to 52 (MSSWSNQPAMDDYGLPSSNPYGNFTVVDMAPKDILHMIHPHWYQYPPMNPMM) are Extracellular-facing. Residue Asn23 is glycosylated (N-linked (GlcNAc...) asparagine). Residues 53–77 (YPLLLIFMLFTGILCLAGNFVTIWV) traverse the membrane as a helical segment. Over 78–89 (FMNTKSLRTPAN) the chain is Cytoplasmic. Residues 90 to 112 (LLVVNLAMSDFLMMFTMFPPMMV) traverse the membrane as a helical segment. At 113 to 126 (TCYYHTWTLGPTFC) the chain is on the extracellular side. An intrachain disulfide couples Cys126 to Cys203. A helical membrane pass occupies residues 127–149 (QVYAFLGNLCGCASIWTMVFITF). The 'Ionic lock' involved in activated form stabilization motif lies at 150–152 (DRY). Residues 150-168 (DRYNVIVKGVAGEPLSTKK) lie on the Cytoplasmic side of the membrane. A helical transmembrane segment spans residues 169 to 189 (ASLWILTIWVLSITWCIAPFF). The Extracellular portion of the chain corresponds to 190-216 (GWNRYVPEGNLTGCGTDYLSEDILSRS). N-linked (GlcNAc...) asparagine glycosylation occurs at Asn199. The helical transmembrane segment at 217–237 (YLYDYSTWVYYLPLLPIYCYV) threads the bilayer. The Cytoplasmic segment spans residues 238–278 (SIIKAVAAHEKGMRDQAKKMGIKSLRNEEAQKTSAECRLAK). The helical transmembrane segment at 279–300 (IAMTTVALWFIAWTPYLLINWV) threads the bilayer. Topologically, residues 301 to 311 (GMFARSYLSPV) are extracellular. A helical membrane pass occupies residues 312 to 333 (YTIWGYVFAKANAVYNPIVYAI). Lys321 is modified (N6-(retinylidene)lysine). Over 334-376 (SHPKYRAAMEKKLPCLSCKTESDDVSESASTTTSSAEEKAESA) the chain is Cytoplasmic. The segment at 353 to 376 (TESDDVSESASTTTSSAEEKAESA) is disordered.

This sequence belongs to the G-protein coupled receptor 1 family. Opsin subfamily. In terms of assembly, homodimer. Interacts with GNAQ. In terms of processing, contains one covalently linked retinal chromophore. In terms of tissue distribution, detected on rhabdomere membranes on photoreceptor cells in the retina (at protein level).

The protein resides in the cell projection. The protein localises to the rhabdomere membrane. Photoreceptor required for image-forming vision at low light intensity. Can use both retinal and 3-dehydroretinal as visual pigment. Light-induced isomerization of 11-cis to all-trans retinal triggers a conformational change that activates signaling via G-proteins. Signaling via GNAQ probably mediates the activation of phospholipase C. In Procambarus clarkii (Red swamp crayfish), this protein is Rhodopsin (RHO).